We begin with the raw amino-acid sequence, 530 residues long: Zinc finger protein ZIC 4 (530 aa).

Composition is skewed to basic residues over residues 31–40 (HHPHHHHHPP) and 97–113 (NPHH…HHMA). 2 disordered regions span residues 31–50 (HHPH…TGYP) and 87–138 (PGAL…SYSS). Residues 284–317 (LICKWIEEDQLPKKLCSKTFSTMHELVTHVTVEH) form a C2H2-type 1; atypical zinc finger. A C2H2-type 2; atypical zinc finger spans residues 326–353 (HICFWEECPREGKPFKAKYKLVNHIRVH). 3 C2H2-type zinc fingers span residues 359–383 (FPCP…KRTH), 389–413 (FKCE…SHVH), and 419–443 (YNCK…MKVH). The interval 432 to 530 (HPSSLRKHMK…YSNWQATNTF (99 aa)) is disordered. Basic residues predominate over residues 435–444 (SLRKHMKVHC). 2 stretches are compositionally biased toward low complexity: residues 455–467 (SSIP…SSDS) and 474–485 (TSSQPEPPTSSQ). The span at 520 to 530 (SYSNWQATNTF) shows a compositional bias: polar residues.

Belongs to the GLI C2H2-type zinc-finger protein family. In terms of tissue distribution, at mid-gastrula stage (stage 11.5), weakly expressed in the prospective neural fold. Expressed in the neural plate border region at early neurula stage (stage 15) with strongest expression in the prospective regions of the hyoid and branchial crests. Expression in the dorsal central nervous system (CNS) continues through late neurula stage and early tail bud stages with expression strongest in the olfactory placode and expression levels increasing as development progresses. Becomes expressed in somites.

Its subcellular location is the nucleus. May bind to DNA. Induces neural and neural crest differentiation. Does not induce anterior neural tissue. The sequence is that of Zinc finger protein ZIC 4 (zic4) from Xenopus laevis (African clawed frog).